The sequence spans 207 residues: LexA repressor (207 aa).

The H-T-H motif DNA-binding region spans 28 to 47 (VREIARRFRITPRGAQLHLV). Residues S119 and K156 each act as for autocatalytic cleavage activity in the active site.

This sequence belongs to the peptidase S24 family. In terms of assembly, homodimer.

The enzyme catalyses Hydrolysis of Ala-|-Gly bond in repressor LexA.. In terms of biological role, represses a number of genes involved in the response to DNA damage (SOS response), including recA and lexA. In the presence of single-stranded DNA, RecA interacts with LexA causing an autocatalytic cleavage which disrupts the DNA-binding part of LexA, leading to derepression of the SOS regulon and eventually DNA repair. The polypeptide is LexA repressor (Thermotoga neapolitana (strain ATCC 49049 / DSM 4359 / NBRC 107923 / NS-E)).